The following is a 593-amino-acid chain: Dolichyl-phosphooligosaccharide-protein glycotransferase 2 (593 aa).

Topologically, residues 1–12 are cytoplasmic; it reads MTPVGMDRKSLS. The helical transmembrane segment at 13 to 33 threads the bilayer; it reads LLILIVLLGLCIRLQNFGEIF. At 34 to 98 the chain is on the extracellular side; the sequence is DSRIYYYGYD…GLFLGFWASE (65 aa). The DXD motif 1 signature appears at 41–43; that stretch reads GYD. D43 is a Mn(2+) binding site. Residues 99 to 119 traverse the membrane as a helical segment; sequence IFAVVFPVIIGVLCIVLVYLI. Residues 120–128 lie on the Cytoplasmic side of the membrane; sequence SLEVLRNEK. A helical transmembrane segment spans residues 129-149; the sequence is FALISAFIFSVCPVTVWKSLL. Residues 150–154 are Extracellular-facing; the sequence is GKADH. Residue D153 coordinates Mn(2+). The short motif at 153 to 155 is the DXD motif 2 element; it reads DHH. H154 contributes to the a glycophospholipid binding site. H155 lines the Mn(2+) pocket. The chain crosses the membrane as a helical span at residues 155 to 175; sequence HIWVVFLLLLSIWLVTKPGLL. Residues 176–180 lie on the Cytoplasmic side of the membrane; that stretch reads KLLSG. A helical membrane pass occupies residues 181–201; the sequence is IPMLLMALSWLGAPIYAALLA. At 202–229 the chain is on the extracellular side; the sequence is VSSLFQFNEKEVRIVGISNLIPVLSSIQ. A helical transmembrane segment spans residues 230-250; the sequence is NLFLGFSFLAIAVFLLVGSFV. Residues 251–265 lie on the Cytoplasmic side of the membrane; it reads KRFERRFRYAIVYYL. Residues 266 to 286 form a helical membrane-spanning segment; sequence CICSVALLSAYLMPVGWLGFV. The Extracellular portion of the chain corresponds to 287–310; the sequence is KSGISYVLGTDIYLPTIREARSFQ. The short motif at 302 to 305 is the TIXE motif element; sequence TIRE. A helical transmembrane segment spans residues 311–331; it reads ILGVISSAGYLFFVLAIPALF. A topological domain (cytoplasmic) is located at residue M332. The chain crosses the membrane as a helical span at residues 333 to 353; the sequence is LRNGFLKVFFVLSFLISILQL. Residue R354 is a topological domain, extracellular. R354 is a binding site for a glycophospholipid. A helical transmembrane segment spans residues 355 to 375; it reads FVEVLAFPVAILASYTICQIL. Residues 376–411 lie on the Cytoplasmic side of the membrane; that stretch reads ERVDYPVFRKEEEGESKRRGRKEKKKAVEIRKKDHA. The helical transmembrane segment at 412 to 432 threads the bilayer; the sequence is TVIAFLLFLALPCFANSLAPV. Topologically, residues 433-593 are extracellular; sequence EMTMDWKEAL…FGTVKIFEVK (161 aa). Residues 468-470 are interacts with target acceptor peptide in protein substrate; it reads WWD. The WWDYG motif motif lies at 468–472; that stretch reads WWDYG. The DKi motif motif lies at 524–539; that stretch reads ELTVKPETNKTKFIPI.

This sequence belongs to the STT3 family. Requires Mn(2+) as cofactor. Mg(2+) serves as cofactor. The cofactor is Zn(2+).

It localises to the cell membrane. The enzyme catalyses an archaeal dolichyl phosphooligosaccharide + [protein]-L-asparagine = an archaeal dolichyl phosphate + a glycoprotein with the oligosaccharide chain attached by N-beta-D-glycosyl linkage to a protein L-asparagine.. The protein operates within protein modification; protein glycosylation. In terms of biological role, oligosaccharyl transferase (OST) that catalyzes the initial transfer of a defined glycan (a GalNAc-linked heptasaccharide composed of 4 Hex, 3 dHex and a sulfate for A.fulgidus AglB-S) from the lipid carrier dolichol-monophosphate to an asparagine residue within an Asn-X-Ser/Thr consensus motif in nascent polypeptide chains, the first step in protein N-glycosylation. This Archaeoglobus fulgidus (strain ATCC 49558 / DSM 4304 / JCM 9628 / NBRC 100126 / VC-16) protein is Dolichyl-phosphooligosaccharide-protein glycotransferase 2 (aglB2).